We begin with the raw amino-acid sequence, 476 residues long: Aspartyl/glutamyl-tRNA(Asn/Gln) amidotransferase subunit B (476 aa).

The protein belongs to the GatB/GatE family. GatB subfamily. Heterotrimer of A, B and C subunits.

It catalyses the reaction L-glutamyl-tRNA(Gln) + L-glutamine + ATP + H2O = L-glutaminyl-tRNA(Gln) + L-glutamate + ADP + phosphate + H(+). The enzyme catalyses L-aspartyl-tRNA(Asn) + L-glutamine + ATP + H2O = L-asparaginyl-tRNA(Asn) + L-glutamate + ADP + phosphate + 2 H(+). Functionally, allows the formation of correctly charged Asn-tRNA(Asn) or Gln-tRNA(Gln) through the transamidation of misacylated Asp-tRNA(Asn) or Glu-tRNA(Gln) in organisms which lack either or both of asparaginyl-tRNA or glutaminyl-tRNA synthetases. The reaction takes place in the presence of glutamine and ATP through an activated phospho-Asp-tRNA(Asn) or phospho-Glu-tRNA(Gln). This is Aspartyl/glutamyl-tRNA(Asn/Gln) amidotransferase subunit B from Lactobacillus gasseri (strain ATCC 33323 / DSM 20243 / BCRC 14619 / CIP 102991 / JCM 1131 / KCTC 3163 / NCIMB 11718 / NCTC 13722 / AM63).